The chain runs to 379 residues: uncharacterized protein (379 aa).

This sequence belongs to the mimivirus L17x/L18x family.

This is an uncharacterized protein from Acanthamoeba polyphaga mimivirus (APMV).